Reading from the N-terminus, the 261-residue chain is Glandular kallikrein-7, submandibular/renal (261 aa).

The N-terminal stretch at 1-18 (MWFLILFLDLSLGQIDAA) is a signal peptide. A propeptide spans 19–24 (PPGQSR) (activation peptide). A Peptidase S1 domain is found at 25-258 (VIGGYKCEKN…FTSWIKEVMK (234 aa)). Disulfide bonds link Cys31–Cys173, Cys50–Cys66, Cys152–Cys219, Cys184–Cys198, and Cys209–Cys234. The Charge relay system role is filled by His65. A glycan (N-linked (GlcNAc...) asparagine) is linked at Asn108. Residue Asp120 is the Charge relay system of the active site. Residue Ser213 is the Charge relay system of the active site.

Belongs to the peptidase S1 family. Kallikrein subfamily. As to expression, kidney and submandibular gland. Not expressed in liver, pancreas, spleen, parotid, testis, cortex, prostate, ovary and pituitary.

The enzyme catalyses Preferential cleavage of Arg-|-Xaa bonds in small molecule substrates. Highly selective action to release kallidin (lysyl-bradykinin) from kininogen involves hydrolysis of Met-|-Xaa or Leu-|-Xaa.. Its function is as follows. Glandular kallikreins cleave Met-Lys and Arg-Ser bonds in kininogen to release Lys-bradykinin. Predominant kallikrein protein in the kidney. The protein is Glandular kallikrein-7, submandibular/renal (Klk7) of Rattus norvegicus (Rat).